The sequence spans 78 residues: DNA-directed RNA polymerase subunit Rpo5 (78 aa).

It belongs to the archaeal Rpo5/eukaryotic RPB5 RNA polymerase subunit family. As to quaternary structure, part of the RNA polymerase complex.

The protein resides in the cytoplasm. The catalysed reaction is RNA(n) + a ribonucleoside 5'-triphosphate = RNA(n+1) + diphosphate. In terms of biological role, DNA-dependent RNA polymerase (RNAP) catalyzes the transcription of DNA into RNA using the four ribonucleoside triphosphates as substrates. The polypeptide is DNA-directed RNA polymerase subunit Rpo5 (Methanococcoides burtonii (strain DSM 6242 / NBRC 107633 / OCM 468 / ACE-M)).